Here is a 96-residue protein sequence, read N- to C-terminus: Co-chaperonin GroES (96 aa).

This sequence belongs to the GroES chaperonin family. Heptamer of 7 subunits arranged in a ring. Interacts with the chaperonin GroEL.

It localises to the cytoplasm. In terms of biological role, together with the chaperonin GroEL, plays an essential role in assisting protein folding. The GroEL-GroES system forms a nano-cage that allows encapsulation of the non-native substrate proteins and provides a physical environment optimized to promote and accelerate protein folding. GroES binds to the apical surface of the GroEL ring, thereby capping the opening of the GroEL channel. The polypeptide is Co-chaperonin GroES (Acinetobacter baumannii (strain AB307-0294)).